The following is an 81-amino-acid chain: Small ribosomal subunit protein bS18 (81 aa).

It belongs to the bacterial ribosomal protein bS18 family. As to quaternary structure, part of the 30S ribosomal subunit. Forms a tight heterodimer with protein bS6.

Its function is as follows. Binds as a heterodimer with protein bS6 to the central domain of the 16S rRNA, where it helps stabilize the platform of the 30S subunit. This is Small ribosomal subunit protein bS18 from Rubrobacter xylanophilus (strain DSM 9941 / JCM 11954 / NBRC 16129 / PRD-1).